Consider the following 675-residue polypeptide: Polyphosphate kinase (675 aa).

Position 42 (Asn42) interacts with ATP. Mg(2+) is bound by residues Arg372 and Arg401. Catalysis depends on His431, which acts as the Phosphohistidine intermediate. ATP is bound by residues Tyr464, Arg558, and His586.

Belongs to the polyphosphate kinase 1 (PPK1) family. Mg(2+) serves as cofactor. An intermediate of this reaction is the autophosphorylated ppk in which a phosphate is covalently linked to a histidine residue through a N-P bond.

It carries out the reaction [phosphate](n) + ATP = [phosphate](n+1) + ADP. In terms of biological role, catalyzes the reversible transfer of the terminal phosphate of ATP to form a long-chain polyphosphate (polyP). This is Polyphosphate kinase from Helicobacter pylori (strain ATCC 700392 / 26695) (Campylobacter pylori).